Reading from the N-terminus, the 299-residue chain is N-acetylmuramic acid 6-phosphate etherase (299 aa).

The region spanning 54 to 217 is the SIS domain; the sequence is TIAQYKKGGR…STITMVGVGK (164 aa). Glu-82 serves as the catalytic Proton donor. The active site involves Glu-113.

Belongs to the GCKR-like family. MurNAc-6-P etherase subfamily. Homodimer.

It catalyses the reaction N-acetyl-D-muramate 6-phosphate + H2O = N-acetyl-D-glucosamine 6-phosphate + (R)-lactate. The protein operates within amino-sugar metabolism; N-acetylmuramate degradation. Specifically catalyzes the cleavage of the D-lactyl ether substituent of MurNAc 6-phosphate, producing GlcNAc 6-phosphate and D-lactate. This Staphylococcus aureus (strain USA300) protein is N-acetylmuramic acid 6-phosphate etherase.